A 526-amino-acid chain; its full sequence is Lysine--tRNA ligase (526 aa).

Mg(2+) is bound by residues E431 and E438.

Belongs to the class-II aminoacyl-tRNA synthetase family. As to quaternary structure, homodimer. It depends on Mg(2+) as a cofactor.

It localises to the cytoplasm. The enzyme catalyses tRNA(Lys) + L-lysine + ATP = L-lysyl-tRNA(Lys) + AMP + diphosphate. The sequence is that of Lysine--tRNA ligase from Chlamydia felis (strain Fe/C-56) (Chlamydophila felis).